A 542-amino-acid polypeptide reads, in one-letter code: Chitinase 2 (542 aa).

Residues 1-22 (MLTRTFLGMAISAFLASTGVQA) form the signal peptide. The 286-residue stretch at 29 to 314 (PNVMYYWGQN…SQLYSLVHSG (286 aa)) folds into the GH18 domain. Catalysis depends on Glu-166, which acts as the Proton donor. The segment at 312–356 (HSGGSTPPPPSSSSATKTTTKTTATSTKTTTTTAPTATSTPGSCP) is disordered. The segment covering 323–354 (SSSATKTTTKTTATSTKTTTTTAPTATSTPGS) has biased composition (low complexity). Positions 355–406 (CPVANQPCSTQNQYACTADGKYAVCDHGKWVASSCPSNTVCIPTTDGASIYC) are chitin-binding, high affinity. Positions 447–542 (AQLAVTSTDK…APSTSAWNFK (96 aa)) are excised as a propeptide.

The protein belongs to the glycosyl hydrolase 18 family. Chitinase class III subfamily. Monomer. Post-translationally, O-glycosylated.

It is found in the secreted. The enzyme catalyses Random endo-hydrolysis of N-acetyl-beta-D-glucosaminide (1-&gt;4)-beta-linkages in chitin and chitodextrins.. Probably involved in the apical growth and branching of fungal hyphae. This is Chitinase 2 (CHI2) from Rhizopus oligosporus (Rhizopus microsporus var. oligosporus).